Here is a 547-residue protein sequence, read N- to C-terminus: Chaperonin GroEL (547 aa).

Residues 30–33 (TLGP), lysine 51, 87–91 (DGTTT), glycine 415, and aspartate 495 contribute to the ATP site.

This sequence belongs to the chaperonin (HSP60) family. In terms of assembly, forms a cylinder of 14 subunits composed of two heptameric rings stacked back-to-back. Interacts with the co-chaperonin GroES.

The protein resides in the cytoplasm. It carries out the reaction ATP + H2O + a folded polypeptide = ADP + phosphate + an unfolded polypeptide.. Functionally, together with its co-chaperonin GroES, plays an essential role in assisting protein folding. The GroEL-GroES system forms a nano-cage that allows encapsulation of the non-native substrate proteins and provides a physical environment optimized to promote and accelerate protein folding. The chain is Chaperonin GroEL from Rhizobium leguminosarum bv. trifolii (strain WSM2304).